Reading from the N-terminus, the 320-residue chain is o-succinylbenzoate synthase (320 aa).

Lys-133 functions as the Proton donor in the catalytic mechanism. Residues Asp-161, Glu-190, and Asp-213 each contribute to the Mg(2+) site. Lys-235 acts as the Proton acceptor in catalysis.

Belongs to the mandelate racemase/muconate lactonizing enzyme family. MenC type 1 subfamily. It depends on a divalent metal cation as a cofactor.

The catalysed reaction is (1R,6R)-6-hydroxy-2-succinyl-cyclohexa-2,4-diene-1-carboxylate = 2-succinylbenzoate + H2O. Its pathway is quinol/quinone metabolism; 1,4-dihydroxy-2-naphthoate biosynthesis; 1,4-dihydroxy-2-naphthoate from chorismate: step 4/7. It participates in quinol/quinone metabolism; menaquinone biosynthesis. Its function is as follows. Converts 2-succinyl-6-hydroxy-2,4-cyclohexadiene-1-carboxylate (SHCHC) to 2-succinylbenzoate (OSB). This is o-succinylbenzoate synthase from Salmonella paratyphi A (strain ATCC 9150 / SARB42).